The primary structure comprises 396 residues: Elongation factor Tu (396 aa).

The tr-type G domain maps to Lys10–Glu206. The G1 stretch occupies residues Gly19 to Thr26. Gly19–Thr26 is a binding site for GTP. Thr26 contacts Mg(2+). The segment at Gly60 to Asn64 is G2. Positions Asp81–Gly84 are G3. GTP-binding positions include Asp81–His85 and Asn136–Asp139. The tract at residues Asn136–Asp139 is G4. The G5 stretch occupies residues Ser174–Lys176.

This sequence belongs to the TRAFAC class translation factor GTPase superfamily. Classic translation factor GTPase family. EF-Tu/EF-1A subfamily. Monomer.

The protein localises to the cytoplasm. The enzyme catalyses GTP + H2O = GDP + phosphate + H(+). Its function is as follows. GTP hydrolase that promotes the GTP-dependent binding of aminoacyl-tRNA to the A-site of ribosomes during protein biosynthesis. The polypeptide is Elongation factor Tu (Thiomonas delicata (Thiomonas cuprina)).